The chain runs to 1380 residues: DNA-directed RNA polymerase subunit beta (1380 aa).

The protein belongs to the RNA polymerase beta chain family. In terms of assembly, the RNAP catalytic core consists of 2 alpha, 1 beta, 1 beta' and 1 omega subunit. When a sigma factor is associated with the core the holoenzyme is formed, which can initiate transcription.

It carries out the reaction RNA(n) + a ribonucleoside 5'-triphosphate = RNA(n+1) + diphosphate. Its function is as follows. DNA-dependent RNA polymerase catalyzes the transcription of DNA into RNA using the four ribonucleoside triphosphates as substrates. The protein is DNA-directed RNA polymerase subunit beta of Ehrlichia chaffeensis (strain ATCC CRL-10679 / Arkansas).